A 1072-amino-acid polypeptide reads, in one-letter code: Carbamoyl phosphate synthase large chain (1072 aa).

The tract at residues 1-401 (MPKRLDINTI…SLLKAVRSLE (401 aa)) is carboxyphosphate synthetic domain. ATP contacts are provided by R129, R169, G175, G176, K208, I210, E215, G241, V242, H243, Q284, and E298. Residues 133-327 (RTLMQELNEP…IAKLAAKIAV (195 aa)) form the ATP-grasp 1 domain. Residues Q284, E298, and N300 each contribute to the Mg(2+) site. 3 residues coordinate Mn(2+): Q284, E298, and N300. The interval 402-546 (LGIYHLELDH…YSTYADENES (145 aa)) is oligomerization domain. Residues 547–929 (IVTDRKSVVV…ALYKGLVASG (383 aa)) form a carbamoyl phosphate synthetic domain region. The ATP-grasp 2 domain occupies 671–861 (EAALTKLGIP…MANVATKVIL (191 aa)). Residues R707, R746, E752, G777, V778, H779, S780, Q820, and E832 each contribute to the ATP site. Mg(2+)-binding residues include Q820, E832, and N834. Mn(2+)-binding residues include Q820, E832, and N834. Residues 930–1072 (INIPTHGSVI…QTKRHEVVHA (143 aa)) form the MGS-like domain. The tract at residues 930–1072 (INIPTHGSVI…QTKRHEVVHA (143 aa)) is allosteric domain.

Belongs to the CarB family. In terms of assembly, composed of two chains; the small (or glutamine) chain promotes the hydrolysis of glutamine to ammonia, which is used by the large (or ammonia) chain to synthesize carbamoyl phosphate. Tetramer of heterodimers (alpha,beta)4. It depends on Mg(2+) as a cofactor. Mn(2+) serves as cofactor.

The catalysed reaction is hydrogencarbonate + L-glutamine + 2 ATP + H2O = carbamoyl phosphate + L-glutamate + 2 ADP + phosphate + 2 H(+). The enzyme catalyses hydrogencarbonate + NH4(+) + 2 ATP = carbamoyl phosphate + 2 ADP + phosphate + 2 H(+). It functions in the pathway amino-acid biosynthesis; L-arginine biosynthesis; carbamoyl phosphate from bicarbonate: step 1/1. It participates in pyrimidine metabolism; UMP biosynthesis via de novo pathway; (S)-dihydroorotate from bicarbonate: step 1/3. Its function is as follows. Large subunit of the glutamine-dependent carbamoyl phosphate synthetase (CPSase). CPSase catalyzes the formation of carbamoyl phosphate from the ammonia moiety of glutamine, carbonate, and phosphate donated by ATP, constituting the first step of 2 biosynthetic pathways, one leading to arginine and/or urea and the other to pyrimidine nucleotides. The large subunit (synthetase) binds the substrates ammonia (free or transferred from glutamine from the small subunit), hydrogencarbonate and ATP and carries out an ATP-coupled ligase reaction, activating hydrogencarbonate by forming carboxy phosphate which reacts with ammonia to form carbamoyl phosphate. This Bacillus cereus (strain AH820) protein is Carbamoyl phosphate synthase large chain.